A 129-amino-acid chain; its full sequence is 4-amino-4-deoxychorismate mutase (129 aa).

One can recognise a Chorismate mutase domain in the interval 16–107 (AAATDPLDAL…ETCRLEDEWI (92 aa)).

It carries out the reaction 4-amino-4-deoxychorismate = 4-amino-4-deoxyprephenate. The protein operates within antibiotic biosynthesis. Functionally, involved in pristinamycin I biosynthesis. Probably catalyzes the conversion of 4-amino-4-deoxychorismate to 4-amino-4-deoxyprephenate. The sequence is that of 4-amino-4-deoxychorismate mutase from Streptomyces pristinaespiralis.